A 414-amino-acid polypeptide reads, in one-letter code: Myb1 protein (414 aa).

Myb-like domains follow at residues 242-266 (WNEVSEKLSNNQNAKECQKMWLYYG), 268-320 (FEDD…IKIN), and 328-381 (KVKL…TNLN).

Its subcellular location is the nucleus. Its function is as follows. Transcriptional activator. Has a role in the parasite erythrocytic cycle where it directly regulates key genes involved in cell cycle regulation and progression. Binds directly to Myb regulatory elements. In Plasmodium falciparum (isolate 3D7), this protein is Myb1 protein.